Reading from the N-terminus, the 145-residue chain is Conglutin (145 aa).

The N-terminal stretch at 1-21 (MAKSTILVALLALVLVAHASA) is a signal peptide. Cystine bridges form between cysteine 35-cysteine 92, cysteine 47-cysteine 79, cysteine 80-cysteine 128, cysteine 94-cysteine 136, and cysteine 105-cysteine 145.

It belongs to the 2S seed storage albumins family. In terms of tissue distribution, expressed in seeds. Not expressed in roots, pegs (budding ovaries) or leaves.

The polypeptide is Conglutin (Arachis hypogaea (Peanut)).